We begin with the raw amino-acid sequence, 268 residues long: MPQVTMRQMLEAGVHFGHQTRYWNPKMAPYIFGARGKIHIINLEKTVPLFNDAMNFISSVAQKRGTVLFLGTKRSARETIKEEAERCGMPFMNQRWLGGTLTNFRTVKQSVARLKELEAGETDGTFEKLVKHEVLGLRRERDKLEASLGGIKDMNRLPDAIFVIDIGHEDIAIKEAKKLGIPVIAVVDTNYNPELVDYAIPGNDDAIRAVQLYARAAADAVLEGKAAAPHAASVREEEFAEAAAEGEEKPARRAPAKKAAKKGDDAQA.

Positions 233–268 (SVREEEFAEAAAEGEEKPARRAPAKKAAKKGDDAQA) are disordered.

This sequence belongs to the universal ribosomal protein uS2 family.

The sequence is that of Small ribosomal subunit protein uS2 from Stenotrophomonas maltophilia (strain K279a).